The chain runs to 653 residues: Chromosomal replication initiator protein DnaA (653 aa).

The interval 1-100 (MADVPADLAA…SAGEPPASAS (100 aa)) is domain I, interacts with DnaA modulators. Residues 86–310 (ITVDDSAGEP…PAPATGPGEP (225 aa)) are disordered. A domain II region spans residues 101-312 (PAPPRYEEPE…PATGPGEPTA (212 aa)). 2 stretches are compositionally biased toward basic and acidic residues: residues 120–150 (DPYE…DRHQ) and 221–267 (PSYD…RRNI). The span at 284–310 (GSALPASSGAPGPLAAQPAPATGPGEP) shows a compositional bias: low complexity. Residues 313–529 (RLNPKYLFDT…GALIRVTAFA (217 aa)) are domain III, AAA+ region. Residues glycine 357, glycine 359, lysine 360, and threonine 361 each contribute to the ATP site. Residues 530–653 (SLNRQPVDLG…TELTNRIKNG (124 aa)) form a domain IV, binds dsDNA region.

This sequence belongs to the DnaA family. In terms of assembly, oligomerizes as a right-handed, spiral filament on DNA at oriC.

The protein localises to the cytoplasm. Functionally, plays an essential role in the initiation and regulation of chromosomal replication. ATP-DnaA binds to the origin of replication (oriC) to initiate formation of the DNA replication initiation complex once per cell cycle. Binds the DnaA box (a 9 base pair repeat at the origin) and separates the double-stranded (ds)DNA. Forms a right-handed helical filament on oriC DNA; dsDNA binds to the exterior of the filament while single-stranded (ss)DNA is stabiized in the filament's interior. The ATP-DnaA-oriC complex binds and stabilizes one strand of the AT-rich DNA unwinding element (DUE), permitting loading of DNA polymerase. After initiation quickly degrades to an ADP-DnaA complex that is not apt for DNA replication. Binds acidic phospholipids. The protein is Chromosomal replication initiator protein DnaA of Streptomyces avermitilis (strain ATCC 31267 / DSM 46492 / JCM 5070 / NBRC 14893 / NCIMB 12804 / NRRL 8165 / MA-4680).